Here is a 204-residue protein sequence, read N- to C-terminus: Molybdenum cofactor guanylyltransferase (204 aa).

Residues 12–14, Lys25, Asn53, Asp71, and Asp101 each bind GTP; that span reads LAG. Asp101 is a binding site for Mg(2+).

This sequence belongs to the MobA family. In terms of assembly, monomer. Mg(2+) serves as cofactor.

The protein localises to the cytoplasm. It catalyses the reaction Mo-molybdopterin + GTP + H(+) = Mo-molybdopterin guanine dinucleotide + diphosphate. In terms of biological role, transfers a GMP moiety from GTP to Mo-molybdopterin (Mo-MPT) cofactor (Moco or molybdenum cofactor) to form Mo-molybdopterin guanine dinucleotide (Mo-MGD) cofactor. The protein is Molybdenum cofactor guanylyltransferase of Ralstonia nicotianae (strain ATCC BAA-1114 / GMI1000) (Ralstonia solanacearum).